A 256-amino-acid polypeptide reads, in one-letter code: Thiazole synthase (256 aa).

The active-site Schiff-base intermediate with DXP is the Lys102. Residues Gly163, 189–190 (AG), and 211–212 (AT) contribute to the 1-deoxy-D-xylulose 5-phosphate site.

It belongs to the ThiG family. As to quaternary structure, homotetramer. Forms heterodimers with either ThiH or ThiS.

It localises to the cytoplasm. The enzyme catalyses [ThiS sulfur-carrier protein]-C-terminal-Gly-aminoethanethioate + 2-iminoacetate + 1-deoxy-D-xylulose 5-phosphate = [ThiS sulfur-carrier protein]-C-terminal Gly-Gly + 2-[(2R,5Z)-2-carboxy-4-methylthiazol-5(2H)-ylidene]ethyl phosphate + 2 H2O + H(+). It participates in cofactor biosynthesis; thiamine diphosphate biosynthesis. In terms of biological role, catalyzes the rearrangement of 1-deoxy-D-xylulose 5-phosphate (DXP) to produce the thiazole phosphate moiety of thiamine. Sulfur is provided by the thiocarboxylate moiety of the carrier protein ThiS. In vitro, sulfur can be provided by H(2)S. This is Thiazole synthase from Nocardia farcinica (strain IFM 10152).